A 170-amino-acid polypeptide reads, in one-letter code: MSEEIKNEEIVEEVEATEEVVETPEKSELDLANERAEEFENKYLRAHAEMQNIQRRANEERQTIQRYRSQDLAKKILPSLDNLERALQVEGLTEDVKKGLEMVQESLIQALKEEGVEEVATDVFDPNLHMAIQTVPATDDCPAEHIAQVFQKGYKLHERLLRPAMVVVSE.

The disordered stretch occupies residues 1 to 29 (MSEEIKNEEIVEEVEATEEVVETPEKSEL). Acidic residues predominate over residues 10–22 (IVEEVEATEEVVE).

Belongs to the GrpE family. Homodimer.

The protein localises to the cytoplasm. Its function is as follows. Participates actively in the response to hyperosmotic and heat shock by preventing the aggregation of stress-denatured proteins, in association with DnaK and GrpE. It is the nucleotide exchange factor for DnaK and may function as a thermosensor. Unfolded proteins bind initially to DnaJ; upon interaction with the DnaJ-bound protein, DnaK hydrolyzes its bound ATP, resulting in the formation of a stable complex. GrpE releases ADP from DnaK; ATP binding to DnaK triggers the release of the substrate protein, thus completing the reaction cycle. Several rounds of ATP-dependent interactions between DnaJ, DnaK and GrpE are required for fully efficient folding. The sequence is that of Protein GrpE from Streptococcus suis (strain 98HAH33).